The following is a 296-amino-acid chain: Beta-lactamase (296 aa).

Residues 1–21 (MKAYFIAILTLFTCIATVVRA) form the signal peptide. The active-site Acyl-ester intermediate is Ser-66. Residue 235-237 (KTG) coordinates substrate.

It belongs to the class-A beta-lactamase family.

It carries out the reaction a beta-lactam + H2O = a substituted beta-amino acid. The sequence is that of Beta-lactamase (cblA) from Bacteroides uniformis.